The primary structure comprises 507 residues: Beta-glucosidase 12 (507 aa).

The signal sequence occupies residues 1 to 22; it reads MRTIYLSLLVFIIVLALNEVMA. A beta-D-glucoside is bound at residue glutamine 50. The N-linked (GlcNAc...) asparagine glycan is linked to asparagine 81. Residues histidine 154 and 199-200 each bind a beta-D-glucoside; that span reads NE. The active-site Proton donor is the glutamate 200. Cysteine 219 and cysteine 227 are disulfide-bonded. The N-linked (GlcNAc...) asparagine glycan is linked to asparagine 226. Position 344 (tyrosine 344) interacts with a beta-D-glucoside. Residue asparagine 358 is glycosylated (N-linked (GlcNAc...) asparagine). Residues glutamate 414, tryptophan 459, 466–467, and phenylalanine 475 each bind a beta-D-glucoside; that span reads EW. Glutamate 414 functions as the Nucleophile in the catalytic mechanism.

This sequence belongs to the glycosyl hydrolase 1 family.

The catalysed reaction is Hydrolysis of terminal, non-reducing beta-D-glucosyl residues with release of beta-D-glucose.. In Arabidopsis thaliana (Mouse-ear cress), this protein is Beta-glucosidase 12.